Consider the following 313-residue polypeptide: Porphobilinogen deaminase (313 aa).

S-(dipyrrolylmethanemethyl)cysteine is present on Cys-241.

Belongs to the HMBS family. As to quaternary structure, monomer. The cofactor is dipyrromethane.

The enzyme catalyses 4 porphobilinogen + H2O = hydroxymethylbilane + 4 NH4(+). It participates in porphyrin-containing compound metabolism; protoporphyrin-IX biosynthesis; coproporphyrinogen-III from 5-aminolevulinate: step 2/4. It functions in the pathway porphyrin-containing compound metabolism; chlorophyll biosynthesis. Its function is as follows. Tetrapolymerization of the monopyrrole PBG into the hydroxymethylbilane pre-uroporphyrinogen in several discrete steps. This chain is Porphobilinogen deaminase, found in Chlorobium chlorochromatii (strain CaD3).